Here is a 457-residue protein sequence, read N- to C-terminus: UDP-N-acetylmuramoylalanine--D-glutamate ligase (457 aa).

126 to 132 contacts ATP; the sequence is GTAGKGS.

The protein belongs to the MurCDEF family.

The protein localises to the cytoplasm. The enzyme catalyses UDP-N-acetyl-alpha-D-muramoyl-L-alanine + D-glutamate + ATP = UDP-N-acetyl-alpha-D-muramoyl-L-alanyl-D-glutamate + ADP + phosphate + H(+). The protein operates within cell wall biogenesis; peptidoglycan biosynthesis. In terms of biological role, cell wall formation. Catalyzes the addition of glutamate to the nucleotide precursor UDP-N-acetylmuramoyl-L-alanine (UMA). This Deinococcus radiodurans (strain ATCC 13939 / DSM 20539 / JCM 16871 / CCUG 27074 / LMG 4051 / NBRC 15346 / NCIMB 9279 / VKM B-1422 / R1) protein is UDP-N-acetylmuramoylalanine--D-glutamate ligase.